The chain runs to 155 residues: Pathogenesis-related protein B (155 aa).

Belongs to the BetVI family.

This is Pathogenesis-related protein B (PCPR1-3) from Petroselinum crispum (Parsley).